The following is a 45-amino-acid chain: uncharacterized protein (45 aa).

The segment at 2-25 adopts a C2H2-type zinc-finger fold; it reads YQCLRCGGIFNKRREVVEHLLVGH.

This is an uncharacterized protein from Sulfolobus spindle-shape virus 1 (SSV1).